The sequence spans 138 residues: Ribulose bisphosphate carboxylase small subunit (138 aa).

Belongs to the RuBisCO small chain family. In terms of assembly, heterohexadecamer of 8 large and 8 small subunits.

The protein localises to the plastid. It localises to the chloroplast. RuBisCO catalyzes two reactions: the carboxylation of D-ribulose 1,5-bisphosphate, the primary event in carbon dioxide fixation, as well as the oxidative fragmentation of the pentose substrate in the photorespiration process. Both reactions occur simultaneously and in competition at the same active site. Although the small subunit is not catalytic it is essential for maximal activity. The sequence is that of Ribulose bisphosphate carboxylase small subunit from Antithamnion sp. (Red alga).